The primary structure comprises 469 residues: 3-isopropylmalate dehydratase large subunit (469 aa).

Residues Cys-350, Cys-410, and Cys-413 each coordinate [4Fe-4S] cluster.

It belongs to the aconitase/IPM isomerase family. LeuC type 1 subfamily. In terms of assembly, heterodimer of LeuC and LeuD. [4Fe-4S] cluster serves as cofactor.

The enzyme catalyses (2R,3S)-3-isopropylmalate = (2S)-2-isopropylmalate. It participates in amino-acid biosynthesis; L-leucine biosynthesis; L-leucine from 3-methyl-2-oxobutanoate: step 2/4. Catalyzes the isomerization between 2-isopropylmalate and 3-isopropylmalate, via the formation of 2-isopropylmaleate. The protein is 3-isopropylmalate dehydratase large subunit of Rhizobium etli (strain ATCC 51251 / DSM 11541 / JCM 21823 / NBRC 15573 / CFN 42).